The chain runs to 733 residues: DNA repair and recombination protein RAD54-like (733 aa).

Positions 1-35 (LAKRKAGGEEEDGEWRPPATQKRQKAGSEAESADC) are disordered. The Helicase ATP-binding domain occupies 159–334 (SRRIPGSHGC…FSLVHFVNSG (176 aa)). Residue 172–179 (DEMGLGKT) coordinates ATP. The short motif at 285-288 (DEGH) is the DEGH box element. The Helicase C-terminal domain maps to 488 to 642 (LVLDYILAVT…CVVDEEQDVE (155 aa)). Lys504 carries the post-translational modification N6-acetyllysine. Ser561 carries the post-translational modification Phosphoserine; by NEK1.

The protein belongs to the SNF2/RAD54 helicase family. Homohexamer. Interacts (via N-terminus) with RAD51. Interacts with NAP1L1. Interacts with BRD9; this interaction orchestrates RAD51-RAD54 complex formation. Post-translationally, acetylated. Acetylation promotes interaction with BRD9, and subsequently with RAD54, which is essential for homologous recombination (HR). In terms of processing, phosphorylated. Phosphorylation at Ser-561 by NEK1 specifically in G2 phase allows efficient removal of RAD51 filaments from DNA. In terms of tissue distribution, highly expressed in bursa, thymus, testis, and ovary. Low level of expression seen in all other organs tested.

It is found in the nucleus. In terms of biological role, plays an essential role in homologous recombination (HR) which is a major pathway for repairing DNA double-strand breaks (DSBs), single-stranded DNA (ssDNA) gaps, and stalled or collapsed replication forks. Acts as a molecular motor during the homology search and guides RAD51 ssDNA along a donor dsDNA thereby changing the homology search from the diffusion-based mechanism to a motor-guided mechanism. Plays also an essential role in RAD51-mediated synaptic complex formation which consists of three strands encased in a protein filament formed once homology is recognized. Once DNA strand exchange occured, dissociates RAD51 from nucleoprotein filaments formed on dsDNA. The chain is DNA repair and recombination protein RAD54-like (RAD54L) from Gallus gallus (Chicken).